Reading from the N-terminus, the 459-residue chain is Tryptophan synthase beta chain (459 aa).

N6-(pyridoxal phosphate)lysine is present on Lys-121.

This sequence belongs to the TrpB family. As to quaternary structure, tetramer of two alpha and two beta chains. The cofactor is pyridoxal 5'-phosphate.

It catalyses the reaction (1S,2R)-1-C-(indol-3-yl)glycerol 3-phosphate + L-serine = D-glyceraldehyde 3-phosphate + L-tryptophan + H2O. The protein operates within amino-acid biosynthesis; L-tryptophan biosynthesis; L-tryptophan from chorismate: step 5/5. In terms of biological role, the beta subunit is responsible for the synthesis of L-tryptophan from indole and L-serine. The protein is Tryptophan synthase beta chain (trpB) of Pyrococcus horikoshii (strain ATCC 700860 / DSM 12428 / JCM 9974 / NBRC 100139 / OT-3).